The primary structure comprises 66 residues: Large ribosomal subunit protein bL33c (66 aa).

Belongs to the bacterial ribosomal protein bL33 family.

Its subcellular location is the plastid. The protein is Large ribosomal subunit protein bL33c (rpl33) of Epifagus virginiana (Beechdrops).